Reading from the N-terminus, the 672-residue chain is uncharacterized protein (672 aa).

Residues 1–24 form the signal peptide; that stretch reads MKTLKVLKIFIIVYISSVSLESFA. The next 2 helical transmembrane spans lie at 226–246 and 254–274; these read IIGA…ALNK and ITLF…LGPL. The span at 363-372 shows a compositional bias: polar residues; it reads SNGTSGNNKP. The disordered stretch occupies residues 363–384; the sequence is SNGTSGNNKPIPNFDPDGKKDR. Transmembrane regions (helical) follow at residues 410–430, 436–456, 469–489, and 562–582; these read IILV…LYFI, CMVT…MVLF, VCIS…LLIT, and VVSI…FYYF. A compositionally biased stretch (basic and acidic residues) spans 628 to 646; the sequence is HGKSSLGDKPDIGNKRKDG. A disordered region spans residues 628–672; sequence HGKSSLGDKPDIGNKRKDGAQQGEDAVNSSGGEVADLASGSGGGK.

It belongs to the TrbL/VirB6 family.

It localises to the cell membrane. This is an uncharacterized protein from Rickettsia prowazekii (strain Madrid E).